The sequence spans 469 residues: Neuraminidase (469 aa).

Topologically, residues 1 to 6 (MNPNQK) are intravirion. Residues 7-27 (IITIGSICMVIGIVSLMLQIG) traverse the membrane as a helical segment. The segment at 11–33 (GSICMVIGIVSLMLQIGNIISIW) is involved in apical transport and lipid raft association. The Virion surface portion of the chain corresponds to 28–469 (NIISIWVSHS…GAELPFTIDK (442 aa)). The segment at 36–90 (HSIQTGNQHQAEPCNQSIITYENNTWVNQTYVNISNTNFLTEKAVASVTLAGNSS) is hypervariable stalk region. Asparagine 50, asparagine 58, asparagine 63, asparagine 68, and asparagine 88 each carry an N-linked (GlcNAc...) asparagine; by host glycan. Residues 91-469 (LCPISGWAVY…GAELPFTIDK (379 aa)) form a head of neuraminidase region. 8 cysteine pairs are disulfide-bonded: cysteine 92-cysteine 417, cysteine 124-cysteine 129, cysteine 184-cysteine 231, cysteine 233-cysteine 238, cysteine 279-cysteine 292, cysteine 281-cysteine 290, cysteine 318-cysteine 335, and cysteine 421-cysteine 446. Position 118 (arginine 118) interacts with substrate. N-linked (GlcNAc...) asparagine; by host glycosylation is present at asparagine 146. Catalysis depends on aspartate 151, which acts as the Proton donor/acceptor. Arginine 152 provides a ligand contact to substrate. N-linked (GlcNAc...) asparagine; by host glycosylation occurs at asparagine 235. Position 277–278 (277–278 (EE)) interacts with substrate. Residue arginine 293 participates in substrate binding. Positions 294, 298, and 324 each coordinate Ca(2+). Arginine 368 serves as a coordination point for substrate. N-linked (GlcNAc...) asparagine; by host glycosylation is present at asparagine 386. Residue tyrosine 402 is the Nucleophile of the active site.

This sequence belongs to the glycosyl hydrolase 34 family. As to quaternary structure, homotetramer. Ca(2+) serves as cofactor. N-glycosylated.

The protein localises to the virion membrane. It is found in the host apical cell membrane. The enzyme catalyses Hydrolysis of alpha-(2-&gt;3)-, alpha-(2-&gt;6)-, alpha-(2-&gt;8)- glycosidic linkages of terminal sialic acid residues in oligosaccharides, glycoproteins, glycolipids, colominic acid and synthetic substrates.. Its activity is regulated as follows. Inhibited by the neuraminidase inhibitors zanamivir (Relenza) and oseltamivir (Tamiflu). These drugs interfere with the release of progeny virus from infected cells and are effective against all influenza strains. Resistance to neuraminidase inhibitors is quite rare. Catalyzes the removal of terminal sialic acid residues from viral and cellular glycoconjugates. Cleaves off the terminal sialic acids on the glycosylated HA during virus budding to facilitate virus release. Additionally helps virus spread through the circulation by further removing sialic acids from the cell surface. These cleavages prevent self-aggregation and ensure the efficient spread of the progeny virus from cell to cell. Otherwise, infection would be limited to one round of replication. Described as a receptor-destroying enzyme because it cleaves a terminal sialic acid from the cellular receptors. May facilitate viral invasion of the upper airways by cleaving the sialic acid moieties on the mucin of the airway epithelial cells. Likely to plays a role in the budding process through its association with lipid rafts during intracellular transport. May additionally display a raft-association independent effect on budding. Plays a role in the determination of host range restriction on replication and virulence. Sialidase activity in late endosome/lysosome traffic seems to enhance virus replication. This chain is Neuraminidase, found in Aves (Cat).